A 58-amino-acid chain; its full sequence is uncharacterized protein (58 aa).

The protein localises to the plastid. The protein resides in the chloroplast. This is an uncharacterized protein from Pyropia yezoensis (Susabi-nori).